The sequence spans 298 residues: Oxygen-dependent coproporphyrinogen-III oxidase (298 aa).

Residue S90 participates in substrate binding. A divalent metal cation is bound by residues H94 and H104. The Proton donor role is filled by H104. Residue 106-108 (NVR) coordinates substrate. A divalent metal cation is bound by residues H143 and H173. The tract at residues 238–273 (YVEFNLVWDRGTLFGLQSGGRTESILMSLPPIVKWR) is important for dimerization. 256–258 (GGR) provides a ligand contact to substrate.

It belongs to the aerobic coproporphyrinogen-III oxidase family. In terms of assembly, homodimer. A divalent metal cation is required as a cofactor.

It localises to the cytoplasm. The enzyme catalyses coproporphyrinogen III + O2 + 2 H(+) = protoporphyrinogen IX + 2 CO2 + 2 H2O. Its pathway is porphyrin-containing compound metabolism; protoporphyrin-IX biosynthesis; protoporphyrinogen-IX from coproporphyrinogen-III (O2 route): step 1/1. In terms of biological role, involved in the heme biosynthesis. Catalyzes the aerobic oxidative decarboxylation of propionate groups of rings A and B of coproporphyrinogen-III to yield the vinyl groups in protoporphyrinogen-IX. The sequence is that of Oxygen-dependent coproporphyrinogen-III oxidase from Dechloromonas aromatica (strain RCB).